Consider the following 65-residue polypeptide: Conotoxin VnMLCL-031 (65 aa).

The first 19 residues, 1–19 (MLCLPXFIILLLLASPAAP), serve as a signal peptide directing secretion. A propeptide spanning residues 20-43 (NPLQTRXQSNLIRAGPEDANIKTX) is cleaved from the precursor. At isoleucine 64 the chain carries Isoleucine amide.

This sequence belongs to the conotoxin T superfamily. In terms of tissue distribution, expressed by the venom duct.

The protein resides in the secreted. The sequence is that of Conotoxin VnMLCL-031 from Conus ventricosus (Mediterranean cone).